The chain runs to 129 residues: uncharacterized protein (129 aa).

This sequence belongs to the asfivirus C129R family.

It is found in the virion. Functionally, plays a role in the inhibition of type I interferon signaling pathway. Mechanistically, specifically interacts with 2',3'-cGAMP and cleaves it via its phosphodiesterase activity. In turn, prevents 2',3'-cGAMP interaction with host ER-resident STING1 leading to inhibition of downstream signaling pathway and type I interferon production. This is an uncharacterized protein from Ornithodoros (relapsing fever ticks).